The primary structure comprises 290 residues: uncharacterized protein (290 aa).

7 consecutive transmembrane segments (helical) span residues 40-60 (MHVI…SPVI), 80-100 (DAHV…YTCL), 110-130 (LFGY…YFVW), 139-159 (VHIT…VITF), 166-188 (MYYG…HYFL), 200-220 (MING…WGWF), and 238-260 (WALS…FWVS). In terms of domain architecture, TLC spans 74 to 271 (KTRLNWDAHV…MIDAIRRRAH (198 aa)).

Its subcellular location is the endoplasmic reticulum membrane. This is an uncharacterized protein from Schizosaccharomyces pombe (strain 972 / ATCC 24843) (Fission yeast).